A 229-amino-acid chain; its full sequence is Growth factor receptor-bound protein 2-A (229 aa).

Residues 1-58 (MEAIAKYDFKATADDELSFKRGDVLKVLNEECDQNWYKAELNGKDGFIPKNYIEMKAH) enclose the SH3 1 domain. The region spanning 60 to 152 (WFFGKIPRAK…NQQIFLRDIE (93 aa)) is the SH2 domain. The SH3 2 domain occupies 168 to 227 (QQPTYVQALFDFDPQEDGELGFRRGDFIQVVDNSDPNWWKGTCLSQTGMFPRNYVTPVNR).

It belongs to the GRB2/sem-5/DRK family.

The protein resides in the nucleus. The protein localises to the cytoplasm. It localises to the endosome. Its subcellular location is the golgi apparatus. Functionally, adapter protein that provides a critical link between cell surface growth factor receptors and the Ras signaling pathway. Promotes meiotic reinitiation during oocyte maturation. This Xenopus laevis (African clawed frog) protein is Growth factor receptor-bound protein 2-A (grb2-a).